The primary structure comprises 215 residues: NADH-quinone oxidoreductase subunit C (215 aa).

This sequence belongs to the complex I 30 kDa subunit family. In terms of assembly, NDH-1 is composed of 14 different subunits. Subunits NuoB, C, D, E, F, and G constitute the peripheral sector of the complex.

It is found in the cell inner membrane. The catalysed reaction is a quinone + NADH + 5 H(+)(in) = a quinol + NAD(+) + 4 H(+)(out). Functionally, NDH-1 shuttles electrons from NADH, via FMN and iron-sulfur (Fe-S) centers, to quinones in the respiratory chain. The immediate electron acceptor for the enzyme in this species is believed to be ubiquinone. Couples the redox reaction to proton translocation (for every two electrons transferred, four hydrogen ions are translocated across the cytoplasmic membrane), and thus conserves the redox energy in a proton gradient. The polypeptide is NADH-quinone oxidoreductase subunit C (Methylobacterium radiotolerans (strain ATCC 27329 / DSM 1819 / JCM 2831 / NBRC 15690 / NCIMB 10815 / 0-1)).